We begin with the raw amino-acid sequence, 211 residues long: Transcription factor E (211 aa).

The 121-residue stretch at 10-130 folds into the HTH TFE/IIEalpha-type domain; it reads GNPAIYQYLL…LWLMRMDHMN (121 aa).

Belongs to the TFE family. Monomer. Interaction with RNA polymerase subunits RpoF and RpoE is necessary for Tfe stimulatory transcription activity. Able to interact with Tbp and RNA polymerase in the absence of DNA promoter. Interacts both with the preinitiation and elongation complexes.

Functionally, transcription factor that plays a role in the activation of archaeal genes transcribed by RNA polymerase. Facilitates transcription initiation by enhancing TATA-box recognition by TATA-box-binding protein (Tbp), and transcription factor B (Tfb) and RNA polymerase recruitment. Not absolutely required for transcription in vitro, but particularly important in cases where Tbp or Tfb function is not optimal. It dynamically alters the nucleic acid-binding properties of RNA polymerases by stabilizing the initiation complex and destabilizing elongation complexes. Seems to translocate with the RNA polymerase following initiation and acts by binding to the non template strand of the transcription bubble in elongation complexes. The chain is Transcription factor E from Methanocorpusculum labreanum (strain ATCC 43576 / DSM 4855 / Z).